The primary structure comprises 475 residues: Aspartyl/glutamyl-tRNA(Asn/Gln) amidotransferase subunit B (475 aa).

This sequence belongs to the GatB/GatE family. GatB subfamily. In terms of assembly, heterotrimer of A, B and C subunits.

The enzyme catalyses L-glutamyl-tRNA(Gln) + L-glutamine + ATP + H2O = L-glutaminyl-tRNA(Gln) + L-glutamate + ADP + phosphate + H(+). It carries out the reaction L-aspartyl-tRNA(Asn) + L-glutamine + ATP + H2O = L-asparaginyl-tRNA(Asn) + L-glutamate + ADP + phosphate + 2 H(+). Functionally, allows the formation of correctly charged Asn-tRNA(Asn) or Gln-tRNA(Gln) through the transamidation of misacylated Asp-tRNA(Asn) or Glu-tRNA(Gln) in organisms which lack either or both of asparaginyl-tRNA or glutaminyl-tRNA synthetases. The reaction takes place in the presence of glutamine and ATP through an activated phospho-Asp-tRNA(Asn) or phospho-Glu-tRNA(Gln). The protein is Aspartyl/glutamyl-tRNA(Asn/Gln) amidotransferase subunit B of Caldanaerobacter subterraneus subsp. tengcongensis (strain DSM 15242 / JCM 11007 / NBRC 100824 / MB4) (Thermoanaerobacter tengcongensis).